The following is a 72-amino-acid chain: Guanine nucleotide-binding protein subunit gamma (72 aa).

The segment at 32 to 72 (MVSVAPPKANPSVSSKTKQQQHFKPGKATKDKATTKCCTIS) is disordered. A lipid anchor (S-palmitoyl cysteine) is attached at C68. At C69 the chain carries Cysteine methyl ester. C69 is lipidated: S-farnesyl cysteine. A propeptide spans 70–72 (TIS) (removed in mature form).

The protein belongs to the G protein gamma family. In terms of assembly, g proteins are composed of 3 units, alpha, beta and gamma. Binding of the beta-gamma subunit complex (git5-git11) to the alpha subunit (gpa2) facilitates interaction with GPCR git3.

The protein resides in the cell membrane. Gamma subunit of the heterotrimeric guanine nucleotide-binding protein (G protein) involved in glucose-induced cAMP signaling. The beta-gamma subunits (git5-git11) promote binding of the alpha subunit gpa2 to GPCR git3, which senses extracellular glucose, to activate cAMP-PKA signaling and repress sexual development and gluconeogenesis. This is Guanine nucleotide-binding protein subunit gamma (git11) from Schizosaccharomyces pombe (strain 972 / ATCC 24843) (Fission yeast).